We begin with the raw amino-acid sequence, 219 residues long: MIKTKICGLTEVGQALATARTGADFAGVVFAESKRRITTEKALEIAEALKPLNPRPMLVGVFANQTAEEVNRIASVCRLDRVQLSGNESWEYCNQVNLPVIKVIHVAEGTTAELVIQEIQAGLKALKKTPVFLLDTHTKALFGGSGQSFDWQIVKQVSLKYPVMVAGGLNPENIQGFIKIAKPWGIDVASGVETDGIKDTAKIHLFIERVKDADGNRIC.

This sequence belongs to the TrpF family.

It catalyses the reaction N-(5-phospho-beta-D-ribosyl)anthranilate = 1-(2-carboxyphenylamino)-1-deoxy-D-ribulose 5-phosphate. The protein operates within amino-acid biosynthesis; L-tryptophan biosynthesis; L-tryptophan from chorismate: step 3/5. The sequence is that of N-(5'-phosphoribosyl)anthranilate isomerase from Dehalococcoides mccartyi (strain ATCC BAA-2266 / KCTC 15142 / 195) (Dehalococcoides ethenogenes (strain 195)).